The following is a 310-amino-acid chain: GMP synthase [glutamine-hydrolyzing] subunit B (310 aa).

The 184-residue stretch at 2 to 185 folds into the GMPS ATP-PPase domain; the sequence is FKTEPFIEES…LGLPDQIAHR (184 aa). Residue 29–35 participates in ATP binding; sequence SGGVDSA.

As to quaternary structure, heterodimer composed of a glutamine amidotransferase subunit (A) and a GMP-binding subunit (B).

It catalyses the reaction XMP + L-glutamine + ATP + H2O = GMP + L-glutamate + AMP + diphosphate + 2 H(+). It participates in purine metabolism; GMP biosynthesis; GMP from XMP (L-Gln route): step 1/1. In terms of biological role, catalyzes the synthesis of GMP from XMP. The sequence is that of GMP synthase [glutamine-hydrolyzing] subunit B from Methanococcus maripaludis (strain DSM 14266 / JCM 13030 / NBRC 101832 / S2 / LL).